A 115-amino-acid polypeptide reads, in one-letter code: Protamine-2 (115 aa).

The segment at 1 to 115 (MVRCHVKSPT…RRRRRCGRQL (115 aa)) is disordered. The residue at position 8 (S8) is a Phosphoserine. Over residues 24–38 (ETEHPDQARELRPED) the composition is skewed to basic and acidic residues. Composition is skewed to basic residues over residues 44 to 79 (RTHR…RRRG) and 102 to 115 (RRMR…GRQL).

This sequence belongs to the protamine P2 family. Interacts with TDRP. Proteolytic processing into mature chains is required for histone eviction during spermatogenesis. Transition proteins (TNP1 and TNP2) are required for processing. As to expression, testis.

It localises to the nucleus. The protein resides in the chromosome. Functionally, protamines substitute for histones in the chromatin of sperm during the haploid phase of spermatogenesis. They compact sperm DNA into a highly condensed, stable and inactive complex. The polypeptide is Protamine-2 (PRM2) (Bos taurus (Bovine)).